The primary structure comprises 410 residues: Chloroacetanilide N-alkylformylase, ferredoxin reductase component (410 aa).

FAD is bound by residues G14, D36, K49, V82, R130, D279, and V298.

The protein belongs to the FAD-dependent oxidoreductase family. As to quaternary structure, the chloroacetanilide N-alkylformylase multicomponent enzyme system is composed of an oxygenase component (CndA) and an electron transfer component formed by a ferredoxin reductase (CndC1) and a ferredoxin (CndB1). In vitro, chloroacetanilide N-alkylformylase assays in which CndB1 is substituted for CndB2 demonstrate that the two enzymes possess nearly identical activities. FAD serves as cofactor.

The enzyme catalyses 2 reduced [2Fe-2S]-[ferredoxin] + NAD(+) + H(+) = 2 oxidized [2Fe-2S]-[ferredoxin] + NADH. Component of the chloroacetanilide N-alkylformylase multicomponent enzyme system involved in the degradation of chloroacetanilide herbicides (N-alkoxyalkyl-N-chloroacetyl-substituted aniline derivatives). In vitro, catalyzes the transfers of electrons from ferredoxin (CndB1) to NADH. N-dealkylase utilizes NADH, but not NADPH, as the electron donor. This is Chloroacetanilide N-alkylformylase, ferredoxin reductase component from Rhizorhabdus wittichii (strain DC-6 / KACC 16600) (Sphingomonas wittichii).